Reading from the N-terminus, the 315-residue chain is Protein ORANGE-LIKE, chloroplastic (315 aa).

Residues 1-16 constitute a chloroplast transit peptide; it reads MTCFSSATPHRHHLLL. 2 helical membrane-spanning segments follow: residues 155 to 175 and 207 to 227; these read LYST…LIAP and IVAS…LIEV. Residues 225–307 form a CR-type zinc finger; that stretch reads IEVNNVKQQE…CTGMVTASEH (83 aa). The stretch at 238–245 is one CXXCXGXG motif repeat; the sequence is CKYCLGTG. The stretch at 249-256 is one CXXCXXXG motif repeat; sequence CARCSASG. Residues 282–289 form a CXXCXGXG motif repeat; sequence CLNCSGAG. The CXXCXXXG motif repeat unit spans residues 293–300; the sequence is CPTCLCTG.

Belongs to the orange-like family. Interacts with PSY1.

The protein resides in the plastid. It localises to the chloroplast membrane. Its function is as follows. May be associated with accumulation of carotenoids in chromoplasts. The sequence is that of Protein ORANGE-LIKE, chloroplastic (ORLIKE) from Arabidopsis thaliana (Mouse-ear cress).